A 421-amino-acid polypeptide reads, in one-letter code: D-inositol 3-phosphate glycosyltransferase (421 aa).

Residue His-9 coordinates 1D-myo-inositol 3-phosphate. UDP-N-acetyl-alpha-D-glucosamine is bound by residues 15–16 and Gly-23; that span reads QP. Residues 20–25, Lys-78, Tyr-110, Thr-134, and Arg-154 contribute to the 1D-myo-inositol 3-phosphate site; that span reads DAGGMN. UDP-N-acetyl-alpha-D-glucosamine-binding residues include Arg-231, Lys-236, and Arg-294. Mg(2+) contacts are provided by Tyr-303, Gln-304, and Ala-306. Glu-316 and Glu-324 together coordinate UDP-N-acetyl-alpha-D-glucosamine. Residue Thr-330 participates in Mg(2+) binding.

Belongs to the glycosyltransferase group 1 family. MshA subfamily. In terms of assembly, homodimer.

The enzyme catalyses 1D-myo-inositol 3-phosphate + UDP-N-acetyl-alpha-D-glucosamine = 1D-myo-inositol 2-acetamido-2-deoxy-alpha-D-glucopyranoside 3-phosphate + UDP + H(+). Its function is as follows. Catalyzes the transfer of a N-acetyl-glucosamine moiety to 1D-myo-inositol 3-phosphate to produce 1D-myo-inositol 2-acetamido-2-deoxy-glucopyranoside 3-phosphate in the mycothiol biosynthesis pathway. This Corynebacterium aurimucosum (strain ATCC 700975 / DSM 44827 / CIP 107346 / CN-1) (Corynebacterium nigricans) protein is D-inositol 3-phosphate glycosyltransferase.